Reading from the N-terminus, the 426-residue chain is GTPase Obg (426 aa).

The region spanning 1 to 158 (MFVDQVSVYV…RNIKVELKLI (158 aa)) is the Obg domain. Disordered stretches follow at residues 66–86 (GKRGENGMSKTQHGRNADPLV) and 119–146 (GGRGGRGNTRFATPRNPAPDMAENGEPG). The OBG-type G domain occupies 159–329 (ADVGLVGFPS…LLFAIADKLE (171 aa)). GTP contacts are provided by residues 165 to 172 (GFPSVGKS), 190 to 194 (FTTLS), 212 to 215 (DLPG), 282 to 285 (NKMD), and 310 to 312 (SAL). Positions 172 and 192 each coordinate Mg(2+). The OCT domain occupies 348 to 426 (RYQKEEDPFH…LLEYEFEFIE (79 aa)).

The protein belongs to the TRAFAC class OBG-HflX-like GTPase superfamily. OBG GTPase family. As to quaternary structure, monomer. It depends on Mg(2+) as a cofactor.

It localises to the cytoplasm. Functionally, an essential GTPase which binds GTP, GDP and possibly (p)ppGpp with moderate affinity, with high nucleotide exchange rates and a fairly low GTP hydrolysis rate. Plays a role in control of the cell cycle, stress response, ribosome biogenesis and in those bacteria that undergo differentiation, in morphogenesis control. The chain is GTPase Obg from Oceanobacillus iheyensis (strain DSM 14371 / CIP 107618 / JCM 11309 / KCTC 3954 / HTE831).